A 363-amino-acid chain; its full sequence is Chorismate synthase (363 aa).

R47 contributes to the NADP(+) binding site. Residues 124–126 (RSS), G285, 300–304 (KPTAT), and R326 each bind FMN.

The protein belongs to the chorismate synthase family. In terms of assembly, homotetramer. Requires FMNH2 as cofactor.

The catalysed reaction is 5-O-(1-carboxyvinyl)-3-phosphoshikimate = chorismate + phosphate. It participates in metabolic intermediate biosynthesis; chorismate biosynthesis; chorismate from D-erythrose 4-phosphate and phosphoenolpyruvate: step 7/7. Catalyzes the anti-1,4-elimination of the C-3 phosphate and the C-6 proR hydrogen from 5-enolpyruvylshikimate-3-phosphate (EPSP) to yield chorismate, which is the branch point compound that serves as the starting substrate for the three terminal pathways of aromatic amino acid biosynthesis. This reaction introduces a second double bond into the aromatic ring system. The chain is Chorismate synthase from Opitutus terrae (strain DSM 11246 / JCM 15787 / PB90-1).